Here is a 508-residue protein sequence, read N- to C-terminus: MHKKVLLAILDGYGISNKQHGNAVYHAKTPALDSLIKDYPCVMLEASGEAVGLPQGQIGNSEVGHLNIGAGRIVYTGLSLINQNIKTGAFHHNQVLLEAIARAKANNAKLHLIGLFSHGGVHSHMDHLYALIKLAAPQVKMVLHLFGDGRDVAPCTMKSDLEAFMVFLKDYHNVIIGTLGGRYYGMDRDQRWDREEIAYNAILGNSKASFTDPVAYVQSAYDQKVTDEFLYPAVNGNVDKEQFALKDHDSVIFFNFRPDRARQMSHMLFQTDYYDYTPKAGRKYNLFFVTMMNYEGIKPSAVVFPPETIPNTFGEVIAHNKLKQLRIAETEKYAHVTFFFDGGVEVDLPNETKCMVPSLKVATYDLAPEMACKGITDQLLNQINQFDLTVLNFANPDMVGHTGNYAACVQGLEALDVQIQRIIDFCKANHITLFLTADHGNAEEMIDSNNNPVTKHTVNKVPFVCTDTNIDLQQDSASLANIAPTILAYLGLKQPAEMTANSLLISKK.

Mn(2+) is bound by residues Asp11 and Ser61. The active-site Phosphoserine intermediate is Ser61. Residues His122, 150-151 (RD), Arg182, Arg188, 257-260 (RPDR), and Lys332 contribute to the substrate site. The Mn(2+) site is built by Asp397, His401, Asp438, His439, and His456.

This sequence belongs to the BPG-independent phosphoglycerate mutase family. Monomer. The cofactor is Mn(2+).

It carries out the reaction (2R)-2-phosphoglycerate = (2R)-3-phosphoglycerate. The protein operates within carbohydrate degradation; glycolysis; pyruvate from D-glyceraldehyde 3-phosphate: step 3/5. Catalyzes the interconversion of 2-phosphoglycerate and 3-phosphoglycerate. This chain is 2,3-bisphosphoglycerate-independent phosphoglycerate mutase, found in Mycoplasma pneumoniae (strain ATCC 29342 / M129 / Subtype 1) (Mycoplasmoides pneumoniae).